The sequence spans 189 residues: Glutathione-dependent formaldehyde-activating enzyme (189 aa).

A CENP-V/GFA domain is found at 20–167; sequence FAGGTLVCKC…LKELGLEPYD (148 aa). Positions 27, 29, 48, 50, 53, 95, and 98 each coordinate Zn(2+).

Belongs to the Gfa family. It depends on Zn(2+) as a cofactor.

The enzyme catalyses S-(hydroxymethyl)glutathione = glutathione + formaldehyde. The protein operates within one-carbon metabolism; formaldehyde degradation; formate from formaldehyde (glutathione route): step 1/3. Functionally, catalyzes the condensation of formaldehyde and glutathione to S-hydroxymethylglutathione. This chain is Glutathione-dependent formaldehyde-activating enzyme, found in Rhodopseudomonas palustris (strain BisA53).